The primary structure comprises 245 residues: 1-(5-phosphoribosyl)-5-[(5-phosphoribosylamino)methylideneamino] imidazole-4-carboxamide isomerase (245 aa).

Asp7 (proton acceptor) is an active-site residue. Asp129 (proton donor) is an active-site residue.

Belongs to the HisA/HisF family.

The protein resides in the cytoplasm. It carries out the reaction 1-(5-phospho-beta-D-ribosyl)-5-[(5-phospho-beta-D-ribosylamino)methylideneamino]imidazole-4-carboxamide = 5-[(5-phospho-1-deoxy-D-ribulos-1-ylimino)methylamino]-1-(5-phospho-beta-D-ribosyl)imidazole-4-carboxamide. It functions in the pathway amino-acid biosynthesis; L-histidine biosynthesis; L-histidine from 5-phospho-alpha-D-ribose 1-diphosphate: step 4/9. In Shigella boydii serotype 18 (strain CDC 3083-94 / BS512), this protein is 1-(5-phosphoribosyl)-5-[(5-phosphoribosylamino)methylideneamino] imidazole-4-carboxamide isomerase.